We begin with the raw amino-acid sequence, 1256 residues long: Bifunctional autolysin (1256 aa).

A signal peptide spans 1-29; sequence MAKKFNYKLPSMVALTLVGSAVTAHQVQA. Residues 103-138 show a composition bias toward polar residues; sequence GDTRANQSATTNNTQPVAKSTSTTAPKTNTNVTNAG. Disordered stretches follow at residues 103-151, 173-219, and 419-440; these read GDTR…NSEN, AAAP…KYKP, and TQST…PSTG. 2 stretches are compositionally biased toward low complexity: residues 173–196 and 421–439; these read AAAP…KVTT and STTT…KPST. The interval 199–775 is N-acetylmuramoyl-L-alanine amidase; sequence ASAQPRSVAA…AVAQPKTAVK (577 aa). GW domains are found at residues 443–517, 519–593, 612–686, 688–762, 784–859, 861–936, and 943–1017; these read TVAA…YNTA, SPVN…DTAK, TVSS…YNNA, SPVN…VPAA, TTQT…VQNL, KEVK…APTA, and AAKD…KELI. The tract at residues 776–1256 is endo-beta-N-acetylglucosaminidase; the sequence is AYTVTKPQTT…GKYFDIPQYK (481 aa).

This sequence in the N-terminal section; belongs to the N-acetylmuramoyl-L-alanine amidase 2 family. The protein in the C-terminal section; belongs to the glycosyl hydrolase 73 family. Oligomer; forms a ring structure at the cell surface which is important for efficient partitioning of daughter cells after cell division. Post-translationally, undergoes proteolytic processing to generate the two extracellular lytic enzymes, probably at the septal region on the cell surface.

The protein localises to the secreted. The enzyme catalyses Hydrolyzes the link between N-acetylmuramoyl residues and L-amino acid residues in certain cell-wall glycopeptides.. The catalysed reaction is an N(4)-(oligosaccharide-(1-&gt;3)-[oligosaccharide-(1-&gt;6)]-beta-D-Man-(1-&gt;4)-beta-D-GlcNAc-(1-&gt;4)-alpha-D-GlcNAc)-L-asparaginyl-[protein] + H2O = an oligosaccharide-(1-&gt;3)-[oligosaccharide-(1-&gt;6)]-beta-D-Man-(1-&gt;4)-D-GlcNAc + N(4)-(N-acetyl-beta-D-glucosaminyl)-L-asparaginyl-[protein]. In terms of biological role, endohydrolysis of the di-N-acetylchitobiosyl unit in high-mannose glycopeptides and glycoproteins containing the -[(Man)5(GlcNAc)2]-Asn structure. One N-acetyl-D-glucosamine residue remains attached to the protein; the rest of the oligosaccharide is released intact. Cleaves the peptidoglycan connecting the daughter cells at the end of the cell division cycle, resulting in the separation of the two newly divided cells. Acts as an autolysin in penicillin-induced lysis. The polypeptide is Bifunctional autolysin (atl) (Staphylococcus aureus (strain MW2)).